The following is a 115-amino-acid chain: Probable 4-amino-4-deoxy-L-arabinose-phosphoundecaprenol flippase subunit ArnE (115 aa).

Helical transmembrane passes span 42–62 (PWPW…LLLL), 65–85 (VEVG…TLAA), and 93–112 (VDRR…ALLG). An EamA domain is found at 46 to 113 (LALLALGLGL…IVAGVALLGR (68 aa)).

It belongs to the ArnE family. As to quaternary structure, heterodimer of ArnE and ArnF.

Its subcellular location is the cell inner membrane. It participates in bacterial outer membrane biogenesis; lipopolysaccharide biosynthesis. Translocates 4-amino-4-deoxy-L-arabinose-phosphoundecaprenol (alpha-L-Ara4N-phosphoundecaprenol) from the cytoplasmic to the periplasmic side of the inner membrane. The polypeptide is Probable 4-amino-4-deoxy-L-arabinose-phosphoundecaprenol flippase subunit ArnE (Pseudomonas aeruginosa (strain LESB58)).